The chain runs to 224 residues: Heme response regulator HssR (224 aa).

A Response regulatory domain is found at 3–116 (QCLVVDDDPR…ELIFRIRAVL (114 aa)). D52 bears the 4-aspartylphosphate mark. A DNA-binding region (ompR/PhoB-type) is located at residues 124–222 (NSEMTIGNLT…VRGQGYKVEN (99 aa)).

Post-translationally, phosphorylated by HssS.

It is found in the cytoplasm. Member of the two-component regulatory system HssS/HssR involved in intracellular heme homeostasis and tempering of staphylococcal virulence. Phosphorylated HssR binds to a direct repeat sequence within hrtAB promoter and activates the expression of hrtAB, an efflux pump, in response to extracellular heme, hemin, hemoglobin or blood. This Staphylococcus aureus (strain Mu50 / ATCC 700699) protein is Heme response regulator HssR (hssR).